The primary structure comprises 1014 residues: Endogenous retrovirus group K member 10 Pol protein (1014 aa).

In terms of domain architecture, Reverse transcriptase spans 57 to 245 (LEKGHIEPSF…TPFHYLGMQI (189 aa)). The LPQG signature appears at 161–164 (LPQG). The YXDD motif lies at 195-198 (YIDD). The RNase H type-1 domain maps to 460-590 (LENALTVFTD…ADLLVSSALI (131 aa)). 4 residues coordinate Mg(2+): aspartate 469, glutamate 497, aspartate 517, and aspartate 582. The segment at 587-628 (SALIKAQELHALTHVNAAGLKNKFDVTWKQAKDIVQHCTQCQ) adopts an Integrase-type zinc-finger fold. The Zn(2+) site is built by histidine 596, histidine 600, cysteine 624, and cysteine 627. An Integrase catalytic domain is found at 642–803 (RGLCPNALWQ…TSAEQHLTGK (162 aa)). Positions 811–859 (KLIWWKDNKNKTWEIGKVITWGRGFACVSPGENQLPVWLPTRHLKFYNE) form a DNA-binding region, integrase-type.

Belongs to the beta type-B retroviral polymerase family. HERV class-II K(HML-2) pol subfamily.

The enzyme catalyses DNA(n) + a 2'-deoxyribonucleoside 5'-triphosphate = DNA(n+1) + diphosphate. The catalysed reaction is Endonucleolytic cleavage to 5'-phosphomonoester.. In terms of biological role, early post-infection, the reverse transcriptase converts the viral RNA genome into double-stranded viral DNA. The RNase H domain of the reverse transcriptase performs two functions. It degrades the RNA template and specifically removes the RNA primer from the RNA/DNA hybrid. Following nuclear import, the integrase catalyzes the insertion of the linear, double-stranded viral DNA into the host cell chromosome. Endogenous Pol proteins may have kept, lost or modified their original function during evolution. The protein is Endogenous retrovirus group K member 10 Pol protein (ERVK-10) of Homo sapiens (Human).